The sequence spans 366 residues: Ferredoxin--NADP reductase, leaf isozyme 2, chloroplastic (366 aa).

The N-terminal 48 residues, 1 to 48 (MAAVNTVSSLPCSKAGAAVAGGAPRPSTCSVFYPPRCWSKRSSGNGVR), are a transit peptide targeting the chloroplast. Residues 87 to 209 (KEPYTGRCLL…TGPVGKEMLM (123 aa)) enclose the FAD-binding FR-type domain. Residues 145–148 (RLYS), 166–168 (CVK), Tyr172, and 183–185 (VCS) contribute to the FAD site. NADP(+)-binding residues include Ser148 and Lys168. Cys184 and Cys189 are joined by a disulfide. Phosphoserine is present on Ser185. Residue Thr216 is modified to Phosphothreonine. Thr224 provides a ligand contact to FAD. NADP(+) contacts are provided by residues Thr224, 256–257 (VP), 286–287 (SR), Lys296, 325–326 (GL), and Glu364.

It belongs to the ferredoxin--NADP reductase type 1 family. In terms of assembly, heterodimer with LFNR1. Component of high molecular weight thylakoid LFNRs-containing protein complexes containing LIR1, LFNR1, LFNR2, TIC62 and TROL proteins. Interacts directly with LIR1 and TIC62; LIR1 increases the affinity of LFNR1 and LFNR2 for TIC62. FAD is required as a cofactor. Post-translationally, may form interchain disulfide bonds with LIR1.

The protein resides in the plastid. It is found in the chloroplast stroma. The protein localises to the chloroplast thylakoid membrane. The catalysed reaction is 2 reduced [2Fe-2S]-[ferredoxin] + NADP(+) + H(+) = 2 oxidized [2Fe-2S]-[ferredoxin] + NADPH. It participates in energy metabolism; photosynthesis. In terms of biological role, plays a key role in regulating the relative amounts of cyclic and non-cyclic electron flow to meet the demands of the plant for ATP and reducing power. This chain is Ferredoxin--NADP reductase, leaf isozyme 2, chloroplastic, found in Oryza sativa subsp. japonica (Rice).